A 635-amino-acid polypeptide reads, in one-letter code: Interferon-induced GTP-binding protein Mx1 (635 aa).

Positions 31-309 (DLALPAIAVI…LVHHIELSLP (279 aa)) constitute a Dynamin-type G domain. The segment at 41–48 (GDQSSGKS) is G1 motif. 41–48 (GDQSSGKS) contributes to the GTP binding site. The G2 motif stretch occupies residues 66 to 68 (VTR). The segment at 147–150 (DLPG) is G3 motif. Residues 147-151 (DLPGI) and 216-219 (TKPD) each bind GTP. A G4 motif region spans residues 216-219 (TKPD). Residues 248-251 (RCRG) form a G5 motif region. One can recognise a GED domain in the interval 549 to 635 (LEELMRHLKS…MEARNYLVKF (87 aa)).

It belongs to the TRAFAC class dynamin-like GTPase superfamily. Dynamin/Fzo/YdjA family.

It is found in the cytoplasm. The polypeptide is Interferon-induced GTP-binding protein Mx1 (mx1) (Ictalurus punctatus (Channel catfish)).